A 441-amino-acid polypeptide reads, in one-letter code: BTB/POZ domain-containing protein At3g05675 (441 aa).

Residues 20–98 (SDIVVRLRNE…LYVVSDDVHE (79 aa)) form the BTB domain.

Its pathway is protein modification; protein ubiquitination. In terms of biological role, may act as a substrate-specific adapter of an E3 ubiquitin-protein ligase complex (CUL3-RBX1-BTB) which mediates the ubiquitination and subsequent proteasomal degradation of target proteins. The polypeptide is BTB/POZ domain-containing protein At3g05675 (Arabidopsis thaliana (Mouse-ear cress)).